A 247-amino-acid polypeptide reads, in one-letter code: Acetate transporter protein patA (247 aa).

Asn20 is a glycosylation site (N-linked (GlcNAc...) asparagine). A run of 6 helical transmembrane segments spans residues 37–57, 71–91, 106–126, 141–161, 169–189, and 202–222; these read PPIT…AIAF, AITN…LVLV, VFGG…PAFG, ALGY…IAAM, AMLG…FAMA, and AAGA…AHLM.

The protein belongs to the acetate uptake transporter (AceTr) (TC 2.A.96) family.

It is found in the endoplasmic reticulum membrane. It functions in the pathway mycotoxin biosynthesis; patulin biosynthesis. Acetate transporter protein; part of the gene cluster that mediates the biosynthesis of patulin, an acetate-derived tetraketide mycotoxin produced by several fungal species that shows antimicrobial properties against several bacteria. May be involved in the uptake of acetate, a substrate for the synthesis of 6-methylsalicylic acid by the polyketide synthase patK. This chain is Acetate transporter protein patA, found in Aspergillus clavatus (strain ATCC 1007 / CBS 513.65 / DSM 816 / NCTC 3887 / NRRL 1 / QM 1276 / 107).